The primary structure comprises 348 residues: tRNA (cytosine(34)-C(5))-methyltransferase, mitochondrial (348 aa).

Residues Cys139–Lys145, Glu162, Asp193, and Asp211 each bind S-adenosyl-L-methionine. The Nucleophile role is filled by Cys265.

Belongs to the class I-like SAM-binding methyltransferase superfamily. RsmB/NOP family.

It localises to the mitochondrion matrix. The enzyme catalyses cytidine(34) in mitochondrial tRNA + S-adenosyl-L-methionine = 5-methylcytidine(34) in mitochondrial tRNA + S-adenosyl-L-homocysteine + H(+). Mitochondrial tRNA methyltransferase that mediates methylation of cytosine to 5-methylcytosine (m5C) at position 34 of mt-tRNA(Met). mt-tRNA(Met) methylation at cytosine(34) takes place at the wobble position of the anticodon and initiates the formation of 5-formylcytosine (f(5)c) at this position. mt-tRNA(Met) containing the f(5)c modification at the wobble position enables recognition of the AUA codon in addition to the AUG codon, expanding codon recognition in mitochondrial translation. This chain is tRNA (cytosine(34)-C(5))-methyltransferase, mitochondrial, found in Mus musculus (Mouse).